Here is a 299-residue protein sequence, read N- to C-terminus: Pyridoxal kinase PdxY (299 aa).

Position 18 (Ser18) interacts with substrate. Positions 120 and 157 each coordinate ATP. Asp235 lines the substrate pocket.

Belongs to the pyridoxine kinase family. PdxY subfamily. Homodimer. Mg(2+) is required as a cofactor.

The catalysed reaction is pyridoxal + ATP = pyridoxal 5'-phosphate + ADP + H(+). Its pathway is cofactor metabolism; pyridoxal 5'-phosphate salvage; pyridoxal 5'-phosphate from pyridoxal: step 1/1. Functionally, pyridoxal kinase involved in the salvage pathway of pyridoxal 5'-phosphate (PLP). Catalyzes the phosphorylation of pyridoxal to PLP. The protein is Pyridoxal kinase PdxY of Deinococcus geothermalis (strain DSM 11300 / CIP 105573 / AG-3a).